The following is a 482-amino-acid chain: tRNA sulfurtransferase (482 aa).

The region spanning leucine 61–arginine 165 is the THUMP domain. ATP-binding positions include leucine 183 to isoleucine 184, lysine 265, glycine 287, and glutamine 296. A disulfide bridge connects residues cysteine 344 and cysteine 456. In terms of domain architecture, Rhodanese spans phenylalanine 404–proline 482. Cysteine 456 acts as the Cysteine persulfide intermediate in catalysis.

The protein belongs to the ThiI family.

The protein resides in the cytoplasm. It catalyses the reaction [ThiI sulfur-carrier protein]-S-sulfanyl-L-cysteine + a uridine in tRNA + 2 reduced [2Fe-2S]-[ferredoxin] + ATP + H(+) = [ThiI sulfur-carrier protein]-L-cysteine + a 4-thiouridine in tRNA + 2 oxidized [2Fe-2S]-[ferredoxin] + AMP + diphosphate. The enzyme catalyses [ThiS sulfur-carrier protein]-C-terminal Gly-Gly-AMP + S-sulfanyl-L-cysteinyl-[cysteine desulfurase] + AH2 = [ThiS sulfur-carrier protein]-C-terminal-Gly-aminoethanethioate + L-cysteinyl-[cysteine desulfurase] + A + AMP + 2 H(+). The protein operates within cofactor biosynthesis; thiamine diphosphate biosynthesis. Catalyzes the ATP-dependent transfer of a sulfur to tRNA to produce 4-thiouridine in position 8 of tRNAs, which functions as a near-UV photosensor. Also catalyzes the transfer of sulfur to the sulfur carrier protein ThiS, forming ThiS-thiocarboxylate. This is a step in the synthesis of thiazole, in the thiamine biosynthesis pathway. The sulfur is donated as persulfide by IscS. The chain is tRNA sulfurtransferase from Escherichia fergusonii (strain ATCC 35469 / DSM 13698 / CCUG 18766 / IAM 14443 / JCM 21226 / LMG 7866 / NBRC 102419 / NCTC 12128 / CDC 0568-73).